Here is a 122-residue protein sequence, read N- to C-terminus: Large ribosomal subunit protein uL14c (122 aa).

The protein belongs to the universal ribosomal protein uL14 family. As to quaternary structure, part of the 50S ribosomal subunit.

It is found in the plastid. Its subcellular location is the chloroplast. Binds to 23S rRNA. The chain is Large ribosomal subunit protein uL14c from Porphyra purpurea (Red seaweed).